We begin with the raw amino-acid sequence, 39 residues long: MERTPNPNRQAVELNRTSLYLGLLLVAVLGILFSSYFFN.

Residues 18 to 38 (SLYLGLLLVAVLGILFSSYFF) traverse the membrane as a helical segment.

Belongs to the PsbL family. PSII is composed of 1 copy each of membrane proteins PsbA, PsbB, PsbC, PsbD, PsbE, PsbF, PsbH, PsbI, PsbJ, PsbK, PsbL, PsbM, PsbT, PsbX, PsbY, PsbZ, Psb30/Ycf12, peripheral proteins PsbO, CyanoQ (PsbQ), PsbU, PsbV and a large number of cofactors. It forms dimeric complexes.

Its subcellular location is the cellular thylakoid membrane. Functionally, one of the components of the core complex of photosystem II (PSII). PSII is a light-driven water:plastoquinone oxidoreductase that uses light energy to abstract electrons from H(2)O, generating O(2) and a proton gradient subsequently used for ATP formation. It consists of a core antenna complex that captures photons, and an electron transfer chain that converts photonic excitation into a charge separation. This subunit is found at the monomer-monomer interface and is required for correct PSII assembly and/or dimerization. In Microcystis aeruginosa (strain NIES-843 / IAM M-2473), this protein is Photosystem II reaction center protein L.